The following is a 99-amino-acid chain: MICOS complex subunit MIC10 (99 aa).

A run of 2 helical transmembrane segments spans residues 27–43 (RFVY…LLFF) and 50–66 (WASI…SAYT).

Belongs to the MICOS complex subunit Mic10 family. Component of the mitochondrial contact site and cristae organizing system (MICOS) complex. The MICOS complex associates with mitochondrial outer membrane proteins. Present in a large lipid-enriched complex called mitochondrial transmembrane lipoprotein (MTL) complex made of proteins located in the two mitochondrial membranes, including the TOM complex and the core components of the MICOS complex and containing at least digalactosyldiacylglycerol (DGDG).

It localises to the mitochondrion inner membrane. Its function is as follows. Component of the MICOS complex, a large protein complex of the mitochondrial inner membrane that plays crucial roles in the maintenance of crista junctions, inner membrane architecture, and formation of contact sites to the outer membrane. The sequence is that of MICOS complex subunit MIC10 from Arabidopsis thaliana (Mouse-ear cress).